The primary structure comprises 242 residues: ATP synthase subunit a, organellar chromatophore (242 aa).

5 helical membrane-spanning segments follow: residues 28 to 48 (LHGQVFISSWVVISALLVLVI), 89 to 109 (LPFIGTLFLFIFGCNWGGALV), 128 to 148 (INTTVAMALLVSLSYFYAGLS), 193 to 213 (LVVGVLAFLVPILVPLPAMFL), and 214 to 234 (GLFTSAIQALIFATLAANYIG).

The protein belongs to the ATPase A chain family. F-type ATPases have 2 components, CF(1) - the catalytic core - and CF(0) - the membrane proton channel. CF(1) has five subunits: alpha(3), beta(3), gamma(1), delta(1), epsilon(1). CF(0) has four main subunits: a, b, b' and c.

The protein localises to the plastid. The protein resides in the organellar chromatophore thylakoid membrane. Functionally, key component of the proton channel; it plays a direct role in the translocation of protons across the membrane. The polypeptide is ATP synthase subunit a, organellar chromatophore (Paulinella chromatophora).